Reading from the N-terminus, the 648-residue chain is Siderophore transporter MYCGRDRAFT_70577 (648 aa).

Basic and acidic residues-rich tracts occupy residues 1 to 11 and 29 to 46; these read MRTSSESHSRS and SASK…DTSI. Residues 1 to 58 are disordered; the sequence is MRTSSESHSRSDAFNGKNDASQVTVDSDSASKDHHDHDHHHKDTSINERQSQHVHQQA. Residues 47–58 show a composition bias toward polar residues; sequence NERQSQHVHQQA. Helical transmembrane passes span 79-99, 151-171, 205-225, 236-256, 303-323, 336-356, 409-429, 438-458, 468-488, 500-520, and 578-598; these read LLLY…ALDQ, VVVL…QGLA, AFWS…NGFI, WGLG…IWTL, LIGL…LNLA, IAML…EALL, TIFI…GGLI, TLMV…LDGN, LAVS…ARVG, VVIS…STIA, and GIIL…SCLM.

The protein belongs to the major facilitator superfamily.

Its subcellular location is the cell membrane. Its function is as follows. Siderophore transporter; part of the gene cluster 14 that mediates the biosynthesis of a ferrichrome A-like siderophors which may contribute to organismal virulence. This Zymoseptoria tritici (strain CBS 115943 / IPO323) (Speckled leaf blotch fungus) protein is Siderophore transporter MYCGRDRAFT_70577.